A 220-amino-acid chain; its full sequence is MTKGILGRKVGMTQVFGENGELIPVTVVEAAQNVVLQKKTEEVDGYSSIQIGFEDKQAYKADRKSNKFATKPAEGHAKKAGTAPKRFIREFRNVDTEAYEVGQEVTVDTFQTGDIVDVTGVSKGKGFQGAIKRHGQSRGPMSHGSRYHRRPGSMGMASDASKVFKGKALPGRMGGNTVTMQNLEIVKVDAENNVILVKGNVPGPKKGLVKIQTSIKKGNK.

Residues 126-158 (GFQGAIKRHGQSRGPMSHGSRYHRRPGSMGMAS) form a disordered region.

It belongs to the universal ribosomal protein uL3 family. In terms of assembly, part of the 50S ribosomal subunit. Forms a cluster with proteins L14 and L19.

In terms of biological role, one of the primary rRNA binding proteins, it binds directly near the 3'-end of the 23S rRNA, where it nucleates assembly of the 50S subunit. The protein is Large ribosomal subunit protein uL3 of Macrococcus caseolyticus (strain JCSC5402) (Macrococcoides caseolyticum).